The primary structure comprises 416 residues: ABSCISIC ACID-INSENSITIVE 5-like protein 5 (416 aa).

Positions 1-23 are disordered; that stretch reads MDGSMNLGNEPPGDGGGGGGLTR. Positions 13-22 are enriched in gly residues; sequence GDGGGGGGLT. A phosphoserine mark is found at S26, S45, and S86. T135 carries the post-translational modification Phosphothreonine. Residues 300-326 form a disordered region; it reads SEGIGKSNGDSSSLSPSPYMFNGGVRG. In terms of domain architecture, bZIP spans 336-399; that stretch reads VERRQRRMIK…KNQETEMRNL (64 aa). Residues 338–357 form a basic motif region; it reads RRQRRMIKNRESAARSRARK. Residues 364-385 form a leucine-zipper region; it reads LEAEVAKLKEENDELQRKQARI. A disordered region spans residues 388-416; that stretch reads MQKNQETEMRNLLQGGPKKKLRRTESGPW.

It belongs to the bZIP family. ABI5 subfamily. As to quaternary structure, DNA-binding heterodimer. Interacts with ARIA. Post-translationally, the activation by phosphorylation is induced by abscisic acid (ABA). Phosphorylated by SRK2C, SRK2D, SRK2E, SRK2F and SRK2I in vitro. Expressed in roots, leaves, flowers and siliques but not in seeds.

It is found in the nucleus. In terms of biological role, involved in ABA and stress responses and acts as a positive component of glucose signal transduction. Functions as a transcriptional activator in the ABA-inducible expression of rd29B. Binds specifically to the ABA-responsive element (ABRE) of the rd29B gene promoter. This chain is ABSCISIC ACID-INSENSITIVE 5-like protein 5 (ABF2), found in Arabidopsis thaliana (Mouse-ear cress).